The following is a 270-amino-acid chain: Palmitoyltransferase ZDHHC12-A (270 aa).

Residues M1–S8 lie on the Cytoplasmic side of the membrane. A helical membrane pass occupies residues G9–L29. The Lumenal portion of the chain corresponds to H30 to Q45. A helical membrane pass occupies residues P46 to M66. Residues D67 to R145 lie on the Cytoplasmic side of the membrane. Residues R102–C152 form the DHHC domain. Residue C132 is the S-palmitoyl cysteine intermediate of the active site. The helical transmembrane segment at W146–W166 threads the bilayer. Residues S167–N182 are Lumenal-facing. A helical transmembrane segment spans residues V183–L203. Residues C204–V270 lie on the Cytoplasmic side of the membrane.

The protein belongs to the DHHC palmitoyltransferase family.

It is found in the golgi apparatus membrane. Its subcellular location is the endoplasmic reticulum membrane. It catalyses the reaction L-cysteinyl-[protein] + hexadecanoyl-CoA = S-hexadecanoyl-L-cysteinyl-[protein] + CoA. Its function is as follows. Palmitoyltransferase that catalyzes the addition of palmitate onto various protein substrates. Has a palmitoyltransferase activity toward gephyrin/GPHN, regulating its clustering at synapses and its function in gamma-aminobutyric acid receptor clustering. Acts as an inhibitor of the NLRP3 inflammasome by mediating palmitoylation of NLRP3, thereby promoting NLRP3 degradation by the chaperone-mediated autophagy (CMA) process. The sequence is that of Palmitoyltransferase ZDHHC12-A from Danio rerio (Zebrafish).